The chain runs to 175 residues: ADP-ribosylation factor 6 (175 aa).

The N-myristoyl glycine moiety is linked to residue G2. GTP-binding positions include 20-27, 63-67, and 122-125; these read GLDAAGKT, DVGGQ, and NKQD.

The protein belongs to the small GTPase superfamily. Arf family. As to expression, expressed in the head (at protein level).

It is found in the golgi apparatus. With respect to regulation, activation is generally mediated by a guanine exchange factor (GEF), while inactivation through hydrolysis of bound GTP is catalyzed by a GTPase activating protein (GAP). May be activated by Efa6. In terms of biological role, GTP-binding protein involved in protein trafficking; may modulate vesicle budding and uncoating within the Golgi apparatus. Promotes cell movement and remodeling of the actin cytoskeleton during compound eye morphogenesis. Required for normal ethanol-induced tolerance and preference. Probably after Efa6-mediated activation, counteracts ethanol-induced sedation. The chain is ADP-ribosylation factor 6 from Drosophila melanogaster (Fruit fly).